The following is a 488-amino-acid chain: MEKILMLNDDQIWIFKKHTNNIQLLIEVALYLKSNKSSVSKKDKDAMYDIFSESELYNPRESLRDKPLDTINHKLDGLSYFMFGYSDRINDENKFIFSPLGNLFLKYLHDKDKLSKIFSCMLISMQFPHPYSKPSECFLLYPFRLIFKLLLDKRLQGRLYHYEVYKIIIHTISIDEAKYEFLVKSILNSRKKSWNEKLNELSEIQHKVVKSVYEWQYYIVPLLGSLHIFKINNGDIEQKLYHPQKDGSKSPPTARKANNGYVEINDNLTNFIDKLLNKYSFLDTPILLSDSQRKSNDVTKEIYSFYPELLLAEIGETISFESHILNIPKLITEYSKNPDNSTSGKFEKILEEAFNLFIDVEAQWLAGAGRTDIECMYLPINEKFSIEAKSTKNKLSMINSGRLKRHRTLISANYTIVITPRYVPSVRYDIEAQDIVLITADTLAEYLYNNIISNNRDISYADIQAIIVANLGKDISTQISNLTLSKFG.

The catalysed reaction is Endonucleolytic cleavage of DNA to give specific double-stranded fragments with terminal 5'-phosphates.. In terms of biological role, an S subtype restriction enzyme that recognizes the double-stranded sequences 5'-GACGC-3' and 5'-GCGTC-3' and cleaves respectively 10 bases after G-1 and 10 bases before G'-1. In Avibacterium volantium (Pasteurella volantium), this protein is Type II restriction enzyme HgaI (hgaIR).